Consider the following 371-residue polypeptide: Cytochrome b (371 aa).

4 helical membrane passes run 25-45, 69-90, 105-125, and 170-190; these read FGSMLLSCLFLQTTTGFFLAI, WIMQNTHAISASAFFICIYIHI, WLTGVALLTTLMATAFFGYVL, and FFALHFILPFLIISLSSIHII. Heme b-binding residues include His75 and His89. 2 residues coordinate heme b: His174 and His188. An a ubiquinone-binding site is contributed by His193. The next 4 helical transmembrane spans lie at 218–238, 280–300, 312–332, and 339–358; these read YKDLLMFITLMTMLLLTLSFM, LGGALALTMSIIILTTAPFTH, LAQTLFWTLIATFITITWAAT, and FLLISQTTAILYFSFFIMNP.

This sequence belongs to the cytochrome b family. As to quaternary structure, the cytochrome bc1 complex contains 3 respiratory subunits (MT-CYB, CYC1 and UQCRFS1), 2 core proteins (UQCRC1 and UQCRC2) and probably 6 low-molecular weight proteins. Requires heme b as cofactor.

The protein resides in the mitochondrion inner membrane. Functionally, component of the ubiquinol-cytochrome c reductase complex (complex III or cytochrome b-c1 complex) that is part of the mitochondrial respiratory chain. The b-c1 complex mediates electron transfer from ubiquinol to cytochrome c. Contributes to the generation of a proton gradient across the mitochondrial membrane that is then used for ATP synthesis. This chain is Cytochrome b (MT-CYB), found in Laticauda colubrina (Yellow-lipped sea krait).